A 397-amino-acid chain; its full sequence is Elongation factor Tu (397 aa).

Residues 10 to 207 (KPHCNIGTIG…AVDEWIPQPE (198 aa)) form the tr-type G domain. The interval 19–26 (GHVDHGKT) is G1. 19 to 26 (GHVDHGKT) is a GTP binding site. Thr26 contributes to the Mg(2+) binding site. A G2 region spans residues 61–65 (GITIS). The G3 stretch occupies residues 82 to 85 (DCPG). GTP is bound by residues 82-86 (DCPGH) and 137-140 (NKVD). Residues 137–140 (NKVD) form a G4 region. The G5 stretch occupies residues 175–177 (SAL).

Belongs to the TRAFAC class translation factor GTPase superfamily. Classic translation factor GTPase family. EF-Tu/EF-1A subfamily. In terms of assembly, monomer.

The protein resides in the cytoplasm. It catalyses the reaction GTP + H2O = GDP + phosphate + H(+). Functionally, GTP hydrolase that promotes the GTP-dependent binding of aminoacyl-tRNA to the A-site of ribosomes during protein biosynthesis. The sequence is that of Elongation factor Tu from Sphingopyxis alaskensis (strain DSM 13593 / LMG 18877 / RB2256) (Sphingomonas alaskensis).